We begin with the raw amino-acid sequence, 501 residues long: Acetylcholine receptor subunit beta (501 aa).

The N-terminal stretch at 1–23 (MTPGALLMLLGALGAPLAPGVRG) is a signal peptide. Over 24-244 (SEAEGRLREK…VIFYLIIRRK (221 aa)) the chain is Extracellular. Cysteines 151 and 165 form a disulfide. Asn-164 carries an N-linked (GlcNAc...) asparagine glycan. A run of 3 helical transmembrane segments spans residues 245-269 (PLFY…VFYL), 277-295 (MGLS…LLLA), and 311-332 (YLMF…VLNL). At 333-469 (HHRSPHTHQM…WQFVAMVVDR (137 aa)) the chain is on the cytoplasmic side. Tyr-390 is modified (phosphotyrosine; by Tyr-kinases). A helical membrane pass occupies residues 470 to 488 (LFLWTFIIFTSVGTLVIFL).

The protein belongs to the ligand-gated ion channel (TC 1.A.9) family. Acetylcholine receptor (TC 1.A.9.1) subfamily. Beta-1/CHRNB1 sub-subfamily. Pentamer of two alpha chains, and one each of the beta, delta, and gamma (in immature muscle) or epsilon (in mature muscle) chains. The muscle heteropentamer composed of alpha-1, beta-1, delta, epsilon subunits interacts with the alpha-conotoxin ImII.

The protein localises to the postsynaptic cell membrane. It localises to the cell membrane. It catalyses the reaction K(+)(in) = K(+)(out). The enzyme catalyses Na(+)(in) = Na(+)(out). Its function is as follows. After binding acetylcholine, the AChR responds by an extensive change in conformation that affects all subunits and leads to opening of an ion-conducting channel across the plasma membrane. This Homo sapiens (Human) protein is Acetylcholine receptor subunit beta.